Reading from the N-terminus, the 308-residue chain is ADP-L-glycero-D-manno-heptose-6-epimerase (308 aa).

NADP(+) contacts are provided by residues 10-11, 31-32, lysine 38, lysine 53, 75-79, and asparagine 92; these read MI, DN, and EGACS. The Proton acceptor role is filled by tyrosine 140. Residue lysine 144 participates in NADP(+) binding. Position 169 (asparagine 169) interacts with substrate. Positions 170 and 178 each coordinate NADP(+). Residue lysine 178 is the Proton acceptor of the active site. Residues serine 180, histidine 187, 201-204, arginine 209, and tyrosine 272 contribute to the substrate site; that span reads FEGS.

The protein belongs to the NAD(P)-dependent epimerase/dehydratase family. HldD subfamily. In terms of assembly, homopentamer. NADP(+) serves as cofactor.

It carries out the reaction ADP-D-glycero-beta-D-manno-heptose = ADP-L-glycero-beta-D-manno-heptose. The protein operates within nucleotide-sugar biosynthesis; ADP-L-glycero-beta-D-manno-heptose biosynthesis; ADP-L-glycero-beta-D-manno-heptose from D-glycero-beta-D-manno-heptose 7-phosphate: step 4/4. Catalyzes the interconversion between ADP-D-glycero-beta-D-manno-heptose and ADP-L-glycero-beta-D-manno-heptose via an epimerization at carbon 6 of the heptose. The protein is ADP-L-glycero-D-manno-heptose-6-epimerase of Actinobacillus pleuropneumoniae serotype 7 (strain AP76).